Reading from the N-terminus, the 212-residue chain is Interleukin-6 (212 aa).

Residues 1 to 29 form the signal peptide; the sequence is MNSFSTSAFGPVAFSLGLLLVLPAAFPAP. Intrachain disulfides connect Cys72/Cys78 and Cys101/Cys111. N-linked (GlcNAc...) asparagine glycosylation occurs at Asn73. The N-linked (GlcNAc...) asparagine glycan is linked to Asn172.

It belongs to the IL-6 superfamily. In terms of assembly, component of a hexamer of two molecules each of IL6, IL6R and IL6ST; first binds to IL6R to associate with the signaling subunit IL6ST. Interacts with IL6R (via the N-terminal ectodomain); this interaction may be affected by IL6R-binding with SORL1, hence decreasing IL6 cis signaling. Interacts with SORL1 (via the N-terminal ectodomain); this interaction leads to IL6 internalization and lysosomal degradation. May form a trimeric complex with the soluble SORL1 ectodomain and soluble IL6R receptor; this interaction might stabilize circulating IL6, hence promoting IL6 trans signaling.

Its subcellular location is the secreted. Cytokine with a wide variety of biological functions in immunity, tissue regeneration, and metabolism. Binds to IL6R, then the complex associates to the signaling subunit IL6ST/gp130 to trigger the intracellular IL6-signaling pathway. The interaction with the membrane-bound IL6R and IL6ST stimulates 'classic signaling', whereas the binding of IL6 and soluble IL6R to IL6ST stimulates 'trans-signaling'. Alternatively, 'cluster signaling' occurs when membrane-bound IL6:IL6R complexes on transmitter cells activate IL6ST receptors on neighboring receiver cells. Functionally, IL6 is a potent inducer of the acute phase response. Rapid production of IL6 contributes to host defense during infection and tissue injury, but excessive IL6 synthesis is involved in disease pathology. In the innate immune response, is synthesized by myeloid cells, such as macrophages and dendritic cells, upon recognition of pathogens through toll-like receptors (TLRs) at the site of infection or tissue injury. In the adaptive immune response, is required for the differentiation of B cells into immunoglobulin-secreting cells. Plays a major role in the differentiation of CD4(+) T cell subsets. Essential factor for the development of T follicular helper (Tfh) cells that are required for the induction of germinal-center formation. Required to drive naive CD4(+) T cells to the Th17 lineage. Also required for proliferation of myeloma cells and the survival of plasmablast cells. In terms of biological role, acts as an essential factor in bone homeostasis and on vessels directly or indirectly by induction of VEGF, resulting in increased angiogenesis activity and vascular permeability. Induces, through 'trans-signaling' and synergistically with IL1B and TNF, the production of VEGF. Involved in metabolic controls, is discharged into the bloodstream after muscle contraction increasing lipolysis and improving insulin resistance. 'Trans-signaling' in central nervous system also regulates energy and glucose homeostasis. Mediates, through GLP-1, crosstalk between insulin-sensitive tissues, intestinal L cells and pancreatic islets to adapt to changes in insulin demand. Also acts as a myokine. Plays a protective role during liver injury, being required for maintenance of tissue regeneration. Also has a pivotal role in iron metabolism by regulating HAMP/hepcidin expression upon inflammation or bacterial infection. Through activation of IL6ST-YAP-NOTCH pathway, induces inflammation-induced epithelial regeneration. This is Interleukin-6 (IL6) from Cercocebus atys (Sooty mangabey).